A 473-amino-acid polypeptide reads, in one-letter code: Lactate utilization protein B (473 aa).

2 4Fe-4S ferredoxin-type domains span residues 303–333 (GTAF…GHSY) and 352–381 (YDDY…LHEL). The [4Fe-4S] cluster site is built by C312, C315, C318, C322, C365, C368, and C372.

The protein belongs to the LutB/YkgF family.

In terms of biological role, is involved in L-lactate degradation and allows cells to grow with lactate as the sole carbon source. Has probably a role as an electron transporter during oxidation of L-lactate. The protein is Lactate utilization protein B of Bacillus pumilus (strain SAFR-032).